The sequence spans 409 residues: MASGKAAGKTDAPAPVIKLGGPKPPKVGSSGNASWFQAIKAKKLNTPPPKFEGSGVPDNENIKPSQQHGYWRRQARFKPGKGGRKPVPDAWYFYYTGTGPAADLNWGDTQDGIVWVAAKGADTKSRSNQGTRDPDKFDQYPLRFSDGGPDGNFRWDFIPLNRGRSGRSTAASSAAASRAPSREGSRGRRSDSGDDLIARAAKIIQDQQKKGSRITKAKADEMAHRRYCKRTIPPNYRVDQVFGPRTKGKEGNFGDDKMNEEGIKDGRVTAMLNLVPSSHACLFGSRVTPKLQLDGLHLRFEFTTVVPCDDPQFDNYVKICDQCVDGVGTRPKDDEPKPKSRSSSRPATRGNSPAPRQQRPKKEKKLKKQDDEADKALTSDEERNNAQLEFYDEPKVINWGDAALGENEL.

Disordered stretches follow at residues 1-84 (MASG…KGGR) and 121-194 (ADTK…DSGD). Residues 15–31 (PVIKLGGPKPPKVGSSG) are compositionally biased toward low complexity. The interval 29–160 (SSGNASWFQA…GNFRWDFIPL (132 aa)) is RNA-binding. The CoV N NTD domain occupies 31-156 (GNASWFQAIK…GGPDGNFRWD (126 aa)). Residues 70–84 (YWRRQARFKPGKGGR) show a composition bias toward basic residues. Over residues 162-179 (RGRSGRSTAASSAAASRA) the composition is skewed to low complexity. The segment covering 180–192 (PSREGSRGRRSDS) has biased composition (basic and acidic residues). Phosphoserine; by host is present on residues Ser-190 and Ser-192. Residues 215–331 (TKAKADEMAH…QCVDGVGTRP (117 aa)) form the CoV N CTD domain. A dimerization region spans residues 226 to 333 (RYCKRTIPPN…VDGVGTRPKD (108 aa)). 2 cysteine pairs are disulfide-bonded: Cys-281–Cys-308 and Cys-320–Cys-323. Residues 327 to 396 (VGTRPKDDEP…QLEFYDEPKV (70 aa)) are disordered. The segment covering 358-367 (QRPKKEKKLK) has biased composition (basic residues). The segment covering 368-384 (KQDDEADKALTSDEERN) has biased composition (basic and acidic residues). Thr-378 is modified (phosphothreonine; by host). Ser-379 carries the phosphoserine; by host modification.

This sequence belongs to the gammacoronavirus nucleocapsid protein family. As to quaternary structure, homooligomer. Both monomeric and oligomeric forms interact with RNA. Interacts with protein M. Interacts with NSP3; this interaction serves to tether the genome to the newly translated replicase-transcriptase complex at a very early stage of infection. In terms of processing, ADP-ribosylated. The ADP-ribosylation is retained in the virion during infection. Phosphorylated on serine and threonine residues.

It localises to the virion. It is found in the host endoplasmic reticulum-Golgi intermediate compartment. The protein localises to the host Golgi apparatus. In terms of biological role, packages the positive strand viral genome RNA into a helical ribonucleocapsid (RNP) and plays a fundamental role during virion assembly through its interactions with the viral genome and membrane protein M. Plays an important role in enhancing the efficiency of subgenomic viral RNA transcription as well as viral replication. The polypeptide is Nucleoprotein (Gallus gallus (Chicken)).